The chain runs to 267 residues: Palmitoyltransferase ZDHHC12 (267 aa).

Residues 1–9 (MALWPPLNS) are Cytoplasmic-facing. The chain crosses the membrane as a helical span at residues 10–30 (GMLVRTGHTVLTWGITLVLFL). The Lumenal segment spans residues 31-43 (HDTELRQWEEQGE). Residues 44-64 (LLLPLTFLLLVLSSLLLYLAV) traverse the membrane as a helical segment. Residues 65–140 (SLMDPGYVTT…ENCVGERNHP (76 aa)) are Cytoplasmic-facing. The region spanning 97–147 (RRCRHCLVLQPLRARHCRDCRRCVRRYDHHCPWMENCVGERNHPLFVAYLA) is the DHHC domain. Cys-127 serves as the catalytic S-palmitoyl cysteine intermediate. A helical membrane pass occupies residues 141–161 (LFVAYLALQLVVLLWGLCLAW). Residues 162–178 (SGLQFFQPWGLWLRSTG) lie on the Lumenal side of the membrane. A helical transmembrane segment spans residues 179 to 199 (LLFTTFLLLSFFALVVALLLA). At 200-267 (SHLYLVARNT…EEEEGSSQVV (68 aa)) the chain is on the cytoplasmic side.

This sequence belongs to the DHHC palmitoyltransferase family.

It localises to the golgi apparatus membrane. Its subcellular location is the endoplasmic reticulum membrane. The enzyme catalyses L-cysteinyl-[protein] + hexadecanoyl-CoA = S-hexadecanoyl-L-cysteinyl-[protein] + CoA. Its function is as follows. Palmitoyltransferase that catalyzes the addition of palmitate onto various protein substrates. Has a palmitoyltransferase activity toward gephyrin/GPHN, regulating its clustering at synapses and its function in gamma-aminobutyric acid receptor clustering. Thereby, indirectly regulates GABAergic synaptic transmission. Negatively regulates NLRP3-driven inflammation. Catalyzes NLRP3 palmitoylation, leading to its degradation via the chaperone-mediated autophagy (CMA) process. This Mus musculus (Mouse) protein is Palmitoyltransferase ZDHHC12.